The primary structure comprises 182 residues: Putative manganese efflux pump MntP (182 aa).

Helical transmembrane passes span 6–26, 37–57, 71–91, 101–121, 131–151, and 162–182; these read LIPL…VSLG, ILYI…IGMV, HFAG…SSIL, IGIS…SVGL, IITI…GLLI, and YGEI…LFPI.

Belongs to the MntP (TC 9.B.29) family.

It is found in the cell membrane. Probably functions as a manganese efflux pump. The protein is Putative manganese efflux pump MntP of Bacillus anthracis (strain A0248).